A 158-amino-acid polypeptide reads, in one-letter code: Snaclec convulxin subunit alpha (158 aa).

Residues 1-23 form the signal peptide; it reads MGRFIFVSFGLLVLFLSLSGTGA. 3 cysteine pairs are disulfide-bonded: C27–C38, C55–C152, and C127–C144. Residues 34–158 enclose the C-type lectin domain; the sequence is YDQHCYRIFN…PFVCKFPPQC (125 aa).

Belongs to the snaclec family. As to quaternary structure, tetramer of heterodimers of alpha and beta subunits (alphabeta)(4); disulfide-linked. In terms of tissue distribution, expressed by the venom gland.

It localises to the secreted. Snake venom lectin that activates platelets by binding to the platelet collagen receptor glycoprotein VI (GP6). The indirect activation of integrin alpha-IIb/beta-3 (ITGA2B/ITGB3) also induced by the toxin is upstream the cytoskeletal translocation of GPIb, FcRgamma (FCER1G) and 14-3-3zeta (YWHAZ). The sequence is that of Snaclec convulxin subunit alpha from Crotalus durissus terrificus (South American rattlesnake).